We begin with the raw amino-acid sequence, 118 residues long: MAWALLLLTLLTQGTGSWAQSALTQPPFVSGAPGQSVTISCTGTSSDVGDYDHVFWYQKRLSTTSRLLIYNVNTRPSGISDLFSGSKSGNMASLTISGLKSEVEANYHCSLYSSSYTF.

Positions 1-19 (MAWALLLLTLLTQGTGSWA) are cleaved as a signal peptide. Residues 20 to 44 (QSALTQPPFVSGAPGQSVTISCTGT) form a framework-1 region. The Ig-like domain maps to 34–118 (GQSVTISCTG…CSLYSSSYTF (85 aa)). Cys-41 and Cys-109 are joined by a disulfide. The tract at residues 45–53 (SSDVGDYDH) is complementarity-determining-1. Positions 54–70 (VFWYQKRLSTTSRLLIY) are framework-2. The tract at residues 71–73 (NVN) is complementarity-determining-2. The segment at 74–109 (TRPSGISDLFSGSKSGNMASLTISGLKSEVEANYHC) is framework-3. The interval 110–118 (SLYSSSYTF) is complementarity-determining-3.

Immunoglobulins are composed of two identical heavy chains and two identical light chains; disulfide-linked.

It is found in the secreted. The protein resides in the cell membrane. Its function is as follows. Probable non-functional open reading frame (ORF) of V region of the variable domain of immunoglobulin light chains. Non-functional ORF generally cannot participate in the synthesis of a productive immunoglobulin chain due to altered V-(D)-J or switch recombination and/or splicing site (at mRNA level) and/or conserved amino acid change (protein level). Immunoglobulins, also known as antibodies, are membrane-bound or secreted glycoproteins produced by B lymphocytes. In the recognition phase of humoral immunity, the membrane-bound immunoglobulins serve as receptors which, upon binding of a specific antigen, trigger the clonal expansion and differentiation of B lymphocytes into immunoglobulins-secreting plasma cells. Secreted immunoglobulins mediate the effector phase of humoral immunity, which results in the elimination of bound antigens. The antigen binding site is formed by the variable domain of one heavy chain, together with that of its associated light chain. Thus, each immunoglobulin has two antigen binding sites with remarkable affinity for a particular antigen. The variable domains are assembled by a process called V-(D)-J rearrangement and can then be subjected to somatic hypermutations which, after exposure to antigen and selection, allow affinity maturation for a particular antigen. This is Probable non-functional immunoglobulin lambda variable 2-33 from Homo sapiens (Human).